The following is a 533-amino-acid chain: Probable nucleolar protein 5-1 (533 aa).

Residues 280–398 form the Nop domain; it reads IAPNLTALVG…LEARLRTLEG (119 aa). Residues 402 to 533 are disordered; that stretch reads GRLSGSAKGK…EKKKKKKTEV (132 aa). Basic and acidic residues predominate over residues 412–423; that stretch reads PKIEVYDKDKKK. Over residues 433 to 450 the composition is skewed to polar residues; sequence KTYNTAADSLLQTPTVDS. Basic and acidic residues-rich tracts occupy residues 474 to 489 and 515 to 524; these read TEEP…KTEA and MPAKKKEKSE.

The protein belongs to the NOP5/NOP56 family.

It localises to the nucleus. Its subcellular location is the nucleolus. Its function is as follows. Required for 60S ribosomal subunit biogenesis. The sequence is that of Probable nucleolar protein 5-1 (NOP5-1) from Arabidopsis thaliana (Mouse-ear cress).